The chain runs to 181 residues: Shikimate kinase 2 (181 aa).

12-17 contributes to the ATP binding site; that stretch reads GCGKTT. Residues Thr-16 and Asp-32 each coordinate Mg(2+). 3 residues coordinate substrate: Asp-34, Arg-58, and Gly-79. An LID domain region spans residues 112–126; that stretch reads EAEPEAELRPTLTGK. Residue Arg-120 participates in ATP binding. Arg-139 contacts substrate.

Belongs to the shikimate kinase family. AroL subfamily. In terms of assembly, monomer. It depends on Mg(2+) as a cofactor.

It localises to the cytoplasm. The catalysed reaction is shikimate + ATP = 3-phosphoshikimate + ADP + H(+). Its pathway is metabolic intermediate biosynthesis; chorismate biosynthesis; chorismate from D-erythrose 4-phosphate and phosphoenolpyruvate: step 5/7. Its function is as follows. Catalyzes the specific phosphorylation of the 3-hydroxyl group of shikimic acid using ATP as a cosubstrate. The sequence is that of Shikimate kinase 2 from Salmonella schwarzengrund (strain CVM19633).